The primary structure comprises 222 residues: Voltage-dependent calcium channel gamma-1 subunit (222 aa).

Residues 1-10 (MSPTEAPKVR) lie on the Cytoplasmic side of the membrane. A helical membrane pass occupies residues 11–29 (VTLFCILVGIVLAMTAVVS). Residues 30 to 108 (DHWAVLSPHM…TQKEYSISAA (79 aa)) lie on the Extracellular side of the membrane. 2 N-linked (GlcNAc...) asparagine glycosylation sites follow: N43 and N79. C57 and C80 are oxidised to a cystine. Residues 109–129 (AISVFSLGFLIMGTICALMAF) traverse the membrane as a helical segment. Residues 130-134 (RKKRD) lie on the Cytoplasmic side of the membrane. A helical membrane pass occupies residues 135 to 155 (YLLRPASMFYVFAGLCLFVSL). Over 156–179 (EVMRQSVKRMIDSEDTVWIEYYYS) the chain is Extracellular. A helical transmembrane segment spans residues 180–204 (WSFACACAAFVLLFLGGISLLLFSL). The Cytoplasmic portion of the chain corresponds to 205–222 (PRMPQNPWESCMDAEPEH).

It belongs to the PMP-22/EMP/MP20 family. CACNG subfamily. As to quaternary structure, component of a calcium channel complex consisting of a pore-forming alpha subunit (CACNA1S) and the ancillary subunits CACNB1 or CACNB2, CACNG1 and CACNA2D1. The channel complex contains alpha, beta, gamma and delta subunits in a 1:1:1:1 ratio, i.e. it contains either CACNB1 or CACNB2. In terms of processing, N-glycosylated. As to expression, skeletal muscle (at protein level).

The protein localises to the cell membrane. Its subcellular location is the sarcolemma. Regulatory subunit of the voltage-gated calcium channel that gives rise to L-type calcium currents in skeletal muscle. Regulates channel inactivation kinetics. This chain is Voltage-dependent calcium channel gamma-1 subunit (CACNG1), found in Oryctolagus cuniculus (Rabbit).